A 398-amino-acid polypeptide reads, in one-letter code: Protein trichome birefringence-like 45 (398 aa).

The helical; Signal-anchor for type II membrane protein transmembrane segment at 1 to 21 (MAAVQCLTFLFLFLLQNATSA) threads the bilayer. A GDS motif motif is present at residues 131 to 133 (GDS). The DCXHWCLPGXXDXWN motif motif lies at 375–389 (DCSHWCLPGLPDTWN).

The protein belongs to the PC-esterase family. TBL subfamily.

It is found in the membrane. May act as a bridging protein that binds pectin and other cell wall polysaccharides. Probably involved in maintaining esterification of pectins. May be involved in the specific O-acetylation of cell wall polymers. This Arabidopsis thaliana (Mouse-ear cress) protein is Protein trichome birefringence-like 45 (TBL45).